Here is a 227-residue protein sequence, read N- to C-terminus: MASPSRQPPPGGSGLLQGSRARSYGSLVQSACSPVRERRLEHQLEPGDTLAGLALKYGVTMEQIKRANRLYTNDSIFLKKTLYIPILTEPRDLFNGLDSEEEKDGEEKVHPSNSEVWPHSTERKKQETGAGRANGEVLPTPGQETPTPIHDLSASDFLKKLDSQISLSKKAAAQKLKKGENGVPGEDAGLHLSSPWMQQRAVLGPVPLTRTSRTRTLRDQEDEIFKL.

Over residues 1–11 (MASPSRQPPPG) the composition is skewed to pro residues. A disordered region spans residues 1-22 (MASPSRQPPPGGSGLLQGSRAR). Phosphoserine is present on residues Ser23 and Ser33. One can recognise a LysM domain in the interval 40 to 84 (LEHQLEPGDTLAGLALKYGVTMEQIKRANRLYTNDSIFLKKTLYI). The interval 97 to 150 (LDSEEEKDGEEKVHPSNSEVWPHSTERKKQETGAGRANGEVLPTPGQETPTPIH) is disordered. Ser99, Ser166, Ser194, and Ser212 each carry phosphoserine.

The sequence is that of LysM and putative peptidoglycan-binding domain-containing protein 1 (LYSMD1) from Homo sapiens (Human).